Reading from the N-terminus, the 478-residue chain is Multidrug resistance outer membrane protein MdtQ (478 aa).

Residues 1-21 (MNRDSFYPAIACFPLLLMLAG) form the signal peptide. Cysteine 22 carries N-palmitoyl cysteine lipidation. Cysteine 22 carries the S-diacylglycerol cysteine lipid modification.

The protein belongs to the outer membrane factor (OMF) (TC 1.B.17) family.

Its subcellular location is the cell outer membrane. Its function is as follows. Could be involved in resistance to puromycin, acriflavine and tetraphenylarsonium chloride. In Escherichia coli O157:H7, this protein is Multidrug resistance outer membrane protein MdtQ (mdtQ).